A 152-amino-acid polypeptide reads, in one-letter code: 6,7-dimethyl-8-ribityllumazine synthase (152 aa).

5-amino-6-(D-ribitylamino)uracil contacts are provided by residues phenylalanine 22, 54–56, and 78–80; these read AFE and AVI. 83–84 is a binding site for (2S)-2-hydroxy-3-oxobutyl phosphate; the sequence is ET. Histidine 86 acts as the Proton donor in catalysis. Phenylalanine 111 provides a ligand contact to 5-amino-6-(D-ribitylamino)uracil. Arginine 125 serves as a coordination point for (2S)-2-hydroxy-3-oxobutyl phosphate.

The protein belongs to the DMRL synthase family.

The catalysed reaction is (2S)-2-hydroxy-3-oxobutyl phosphate + 5-amino-6-(D-ribitylamino)uracil = 6,7-dimethyl-8-(1-D-ribityl)lumazine + phosphate + 2 H2O + H(+). The protein operates within cofactor biosynthesis; riboflavin biosynthesis; riboflavin from 2-hydroxy-3-oxobutyl phosphate and 5-amino-6-(D-ribitylamino)uracil: step 1/2. Its function is as follows. Catalyzes the formation of 6,7-dimethyl-8-ribityllumazine by condensation of 5-amino-6-(D-ribitylamino)uracil with 3,4-dihydroxy-2-butanone 4-phosphate. This is the penultimate step in the biosynthesis of riboflavin. The chain is 6,7-dimethyl-8-ribityllumazine synthase from Limosilactobacillus reuteri (strain DSM 20016) (Lactobacillus reuteri).